The primary structure comprises 88 residues: Homeobox protein knotted-1-like 11 (88 aa).

The region spanning 4–24 (ELKEMLLKKYSGCLSRLRSEF) is the ELK domain. Residues 25–88 (LKKRKKGKLP…NQRKRHWKPS (64 aa)) constitute a DNA-binding region (homeobox; TALE-type).

Belongs to the TALE/KNOX homeobox family.

It is found in the nucleus. Probably binds to the DNA sequence 5'-TGAC-3'. In Zea mays (Maize), this protein is Homeobox protein knotted-1-like 11 (KNOX11).